Reading from the N-terminus, the 25-residue chain is GLVNGLLSSVLGGGQGGGGLLGGIL.

It belongs to the frog skin active peptide (FSAP) family. Plasticin subfamily. As to expression, expressed by the skin glands.

Its subcellular location is the secreted. The protein localises to the target cell membrane. Its function is as follows. May play an immunomodulatory role in frog skin in response to microbial pathogens, since it increases the production of the pro-inflammatory cytokines TNF-alpha, IL-1 beta, IL-12, and IL-23 by mouse peritoneal macrophages and has no effect on the production of the anti-inflammatory cytokine IL-10. It is not known whether stimulation of cytokine production arises from a non-specific interaction of the peptide with the macrophage membrane or from interaction with a specific receptor. Shows a low activity in stimulating insulin release from rat BRIN-BD11 beta cells, and acts without loss of integrity of the plasma membrane. Shows a marked affinity for both neutral and anionic membranes models. Does not show antibacterial (E.coli and S.aureus). Does not show hemolytic activity against human erythrocytes. The polypeptide is Plasticin-L1 (Leptodactylus laticeps (Santa Fe frog)).